Here is a 155-residue protein sequence, read N- to C-terminus: Transcriptional repressor NrdR (155 aa).

A zinc finger spans residues 3 to 34 (CPFCSHFESKVVDSRPTDEGQAIRRRRECVSC). The ATP-cone domain maps to 49–139 (LIVVKKSGNR…VYREFKDINT (91 aa)).

This sequence belongs to the NrdR family. Zn(2+) serves as cofactor.

Negatively regulates transcription of bacterial ribonucleotide reductase nrd genes and operons by binding to NrdR-boxes. The chain is Transcriptional repressor NrdR from Alkaliphilus metalliredigens (strain QYMF).